The following is a 299-amino-acid chain: Ribosomal protein L11 methyltransferase (299 aa).

S-adenosyl-L-methionine-binding residues include Thr140, Gly161, Asp183, and Asn232.

It belongs to the methyltransferase superfamily. PrmA family.

The protein localises to the cytoplasm. It carries out the reaction L-lysyl-[protein] + 3 S-adenosyl-L-methionine = N(6),N(6),N(6)-trimethyl-L-lysyl-[protein] + 3 S-adenosyl-L-homocysteine + 3 H(+). In terms of biological role, methylates ribosomal protein L11. In Synechococcus elongatus (strain ATCC 33912 / PCC 7942 / FACHB-805) (Anacystis nidulans R2), this protein is Ribosomal protein L11 methyltransferase.